The following is a 191-amino-acid chain: Calcium-activated potassium channel subunit beta-1 (191 aa).

Residues M1–R15 are Cytoplasmic-facing. Residues A16 to T36 form a helical membrane-spanning segment. The Extracellular portion of the chain corresponds to T37–L157. N80 and N142 each carry an N-linked (GlcNAc...) asparagine glycan. The chain crosses the membrane as a helical span at residues L158 to V178. The Cytoplasmic portion of the chain corresponds to K179–K191.

The protein belongs to the KCNMB (TC 8.A.14.1) family. KCNMB1 subfamily. Interacts with KCNMA1 tetramer. There are probably 4 molecules of KCMNB1 per KCNMA1 tetramer. N-glycosylated.

It is found in the membrane. Regulatory subunit of the calcium activated potassium KCNMA1 (maxiK) channel. Modulates the calcium sensitivity and gating kinetics of KCNMA1, thereby contributing to KCNMA1 channel diversity. Increases the apparent Ca(2+)/voltage sensitivity of the KCNMA1 channel. It also modifies KCNMA1 channel kinetics and alters its pharmacological properties. It slows down the activation and the deactivation kinetics of the channel. Acts as a negative regulator of smooth muscle contraction by enhancing the calcium sensitivity to KCNMA1. Its presence is also a requirement for internal binding of the KCNMA1 channel opener dehydrosoyasaponin I (DHS-1) triterpene glycoside and for external binding of the agonist hormone 17-beta-estradiol (E2). Increases the binding activity of charybdotoxin (CTX) toxin to KCNMA1 peptide blocker by increasing the CTX association rate and decreasing the dissociation rate. This Oryctolagus cuniculus (Rabbit) protein is Calcium-activated potassium channel subunit beta-1 (KCNMB1).